Reading from the N-terminus, the 1598-residue chain is Mushroom body large-type Kenyon cell-specific protein 1 (1598 aa).

Disordered regions lie at residues 83–105, 140–387, 436–462, and 495–525; these read PGNL…SLPA, RHHH…SDGI, PHDD…PMSV, and PLVG…SQDN. Over residues 140 to 151 the composition is skewed to basic residues; that stretch reads RHHHLQNHHHHL. Over residues 164-174 the composition is skewed to low complexity; it reads QQQQQQQQRQQ. Basic and acidic residues predominate over residues 175–191; sequence QRQEERRLRPDEIKVEV. Residues 210 to 263 are compositionally biased toward low complexity; sequence STDASTPATVTTTGATTTLPAASATGTGPATPSAVVATSNATAAMTTGTTTIPT. The span at 275–291 shows a compositional bias: acidic residues; sequence EGADDRDDDEENEEEED. Composition is skewed to basic and acidic residues over residues 292 to 305, 315 to 324, and 335 to 346; these read GRGQ…LKLD, LRREKDRGSR, and DGTKERTEEVAL. S444 carries the post-translational modification Phosphoserine; by MAPK. Positions 445–461 are enriched in low complexity; that stretch reads PQSDSSSSSRSAESPMS. One can recognise an HTH psq-type 1 domain in the interval 582 to 634; it reads VGAGGGRRAYTEEELQAALRDIQSGKLGTRRAAVIYGIPRSTLRNKVYKLAME. A DNA-binding region (H-T-H motif) is located at residues 610 to 630; it reads TRRAAVIYGIPRSTLRNKVYK. 6 disordered regions span residues 636 to 705, 797 to 877, 962 to 1045, 1082 to 1145, 1248 to 1283, and 1301 to 1598; these read ERDA…SGAE, RLSK…DSAQ, GQTV…NYDR, ERHL…NGIK, ETSA…NGSF, and RAMT…SVEQ. Low complexity predominate over residues 653 to 687; sequence APATTITTITTTTTTTTTTTTTTTTPNTTQNASAT. The segment covering 694–705 has biased composition (acidic residues); that stretch reads DEVDDKELSGAE. Residues 820-855 show a composition bias toward low complexity; sequence THPQAQAQAQPQQQQQQQQQQPQQQQQQQQQQQQQQ. A compositionally biased stretch (gly residues) spans 965–975; it reads VSGGGMGGCQP. Low complexity predominate over residues 1003–1021; that stretch reads ANAQQGQAQAQAKPQSQEA. In terms of domain architecture, HTH psq-type 2 spans 1034–1086; it reads RPKRGKYRNYDRDSLVEAVRAVQRGEMSVHRAGSYYGVPHSTLEYKVKERHLM. The H-T-H motif DNA-binding region spans 1062 to 1082; that stretch reads VHRAGSYYGVPHSTLEYKVKE. Positions 1093–1102 are enriched in basic and acidic residues; the sequence is QKQSDDKTKE. The span at 1103-1120 shows a compositional bias: low complexity; that stretch reads TSTVTAAAAATNIRPGTA. The segment covering 1309–1318 has biased composition (low complexity); it reads QQQQASSQQQ. 2 stretches are compositionally biased toward basic and acidic residues: residues 1383-1392 and 1407-1442; these read DRGRNDDGSD and GSRD…DRKT. The span at 1447–1466 shows a compositional bias: low complexity; it reads PQQPQQQQQQQQQQQQQQQQ. The segment covering 1481-1497 has biased composition (basic and acidic residues); sequence TDKKSACDSKLIVDHSS. Low complexity predominate over residues 1501 to 1547; that stretch reads QQQQPQQQQQQQQQQQPQQQSQQPQQQQPQPQQQQQQQQQQQPQQQQ. The segment covering 1562-1577 has biased composition (polar residues); that stretch reads RGYNSGNNRSGEQANS.

Homodimer. As to expression, large-type Kenyon cells of mushroom body.

It localises to the nucleus. Functionally, transcriptional activator which binds to the consensus sequence 5'-CCCTATCGATCGATCTCTACCT-3'. May play a role in higher-order sensory processing. The protein is Mushroom body large-type Kenyon cell-specific protein 1 (Mblk-1) of Apis mellifera (Honeybee).